Reading from the N-terminus, the 43-residue chain is Photosystem II reaction center protein K (43 aa).

Positions 1–6 (MSLLLA) are excised as a propeptide. A helical membrane pass occupies residues 18–38 (IVDVLPIIPVLFLLLAFVWQA).

Belongs to the PsbK family. In terms of assembly, PSII is composed of 1 copy each of membrane proteins PsbA, PsbB, PsbC, PsbD, PsbE, PsbF, PsbH, PsbI, PsbJ, PsbK, PsbL, PsbM, PsbT, PsbX, PsbY, PsbZ, Psb30/Ycf12, at least 3 peripheral proteins of the oxygen-evolving complex and a large number of cofactors. It forms dimeric complexes.

The protein localises to the plastid. The protein resides in the chloroplast thylakoid membrane. In terms of biological role, one of the components of the core complex of photosystem II (PSII). PSII is a light-driven water:plastoquinone oxidoreductase that uses light energy to abstract electrons from H(2)O, generating O(2) and a proton gradient subsequently used for ATP formation. It consists of a core antenna complex that captures photons, and an electron transfer chain that converts photonic excitation into a charge separation. The polypeptide is Photosystem II reaction center protein K (Oltmannsiellopsis viridis (Marine flagellate)).